We begin with the raw amino-acid sequence, 390 residues long: Chorismate synthase 1 (390 aa).

The NADP(+) site is built by arginine 39 and arginine 45. A disordered region spans residues 95-117; the sequence is EQEEKEMKRKVTKPRPGHADLNG. FMN-binding positions include 132-134, 253-254, glycine 298, 313-317, and arginine 339; these read RSS, NA, and KPIPT.

The protein belongs to the chorismate synthase family. Homotetramer. The cofactor is FMNH2.

The catalysed reaction is 5-O-(1-carboxyvinyl)-3-phosphoshikimate = chorismate + phosphate. Its pathway is metabolic intermediate biosynthesis; chorismate biosynthesis; chorismate from D-erythrose 4-phosphate and phosphoenolpyruvate: step 7/7. Its function is as follows. Catalyzes the anti-1,4-elimination of the C-3 phosphate and the C-6 proR hydrogen from 5-enolpyruvylshikimate-3-phosphate (EPSP) to yield chorismate, which is the branch point compound that serves as the starting substrate for the three terminal pathways of aromatic amino acid biosynthesis. This reaction introduces a second double bond into the aromatic ring system. In Bacillus cereus (strain ATCC 10987 / NRS 248), this protein is Chorismate synthase 1.